A 337-amino-acid polypeptide reads, in one-letter code: Fructose-1,6-bisphosphatase class 1 (337 aa).

Mg(2+) is bound by residues E89, D112, L114, and D115. Residues 115–118 (DGSS), N208, Y241, and K271 each bind substrate. E277 contributes to the Mg(2+) binding site.

The protein belongs to the FBPase class 1 family. As to quaternary structure, homotetramer. Mg(2+) serves as cofactor.

The protein resides in the cytoplasm. The enzyme catalyses beta-D-fructose 1,6-bisphosphate + H2O = beta-D-fructose 6-phosphate + phosphate. The protein operates within carbohydrate biosynthesis; gluconeogenesis. The polypeptide is Fructose-1,6-bisphosphatase class 1 (Psychromonas ingrahamii (strain DSM 17664 / CCUG 51855 / 37)).